Here is a 540-residue protein sequence, read N- to C-terminus: Transcription initiation factor IIF subunit alpha (540 aa).

Basic and acidic residues predominate over residues 1-26 (MDSQETKVFENVKQENPDEKKPKVEE). Disordered regions lie at residues 1 to 39 (MDSQ…QSQQ) and 70 to 106 (IDPS…SSSN). Composition is skewed to polar residues over residues 29-39 (SQNNASTQSQQ) and 89-106 (APSS…SSSN). Residues Ser-259 and Ser-261 each carry the phosphoserine modification. A coiled-coil region spans residues 280 to 382 (MEGNEEDNKK…REEKLKSRFS (103 aa)). The tract at residues 341–416 (YESDEEDEDP…SSQLQSPNTS (76 aa)) is disordered. Acidic residues predominate over residues 359–369 (SEEEVLQEEEE). A compositionally biased stretch (polar residues) spans 381–416 (FSANASKTNTPRPLERTPSSVSPVKASSQLQSPNTS). Residue Ser-399 is modified to Phosphoserine.

This sequence belongs to the TFIIF alpha subunit family. In terms of assembly, component of the fcp1/TFIIF/polII complex via interaction of tfg3 with both tfg1/TFIIF-alpha and tfg2/TFIIF-beta subunits.

Its subcellular location is the nucleus. In terms of biological role, TFIIF is a general transcription initiation factor that binds to RNA polymerase II and helps to recruit it to the initiation complex in collaboration with TFIIB. It promotes transcription elongation. The sequence is that of Transcription initiation factor IIF subunit alpha (tfg1) from Schizosaccharomyces pombe (strain 972 / ATCC 24843) (Fission yeast).